Reading from the N-terminus, the 835-residue chain is Ion-translocating oxidoreductase complex subunit C (835 aa).

4Fe-4S ferredoxin-type domains are found at residues Tyr368–Tyr397 and Lys407–Phe436. Positions 377, 380, 383, 387, 416, 419, 422, and 426 each coordinate [4Fe-4S] cluster. Residues Ala468–Met489 show a composition bias toward basic and acidic residues. Disordered stretches follow at residues Ala468–Ala492, Gln540–Ala574, Lys586–Pro618, Lys634–Pro666, Lys682–Pro714, Lys730–Pro762, and Lys778–Arg811. Polar residues predominate over residues Thr552–Glu561. The segment covering Ser648–Asn657 has biased composition (polar residues). 2 stretches are compositionally biased toward polar residues: residues Ser745–Glu756 and Ser793–Glu804.

Belongs to the 4Fe4S bacterial-type ferredoxin family. RnfC subfamily. In terms of assembly, the complex is composed of six subunits: RnfA, RnfB, RnfC, RnfD, RnfE and RnfG. [4Fe-4S] cluster serves as cofactor.

It localises to the cell inner membrane. Functionally, part of a membrane-bound complex that couples electron transfer with translocation of ions across the membrane. This chain is Ion-translocating oxidoreductase complex subunit C, found in Pasteurella multocida (strain Pm70).